A 186-amino-acid chain; its full sequence is Dirigent protein 7 (186 aa).

Positions 1–21 (MAKLILIIVTQILLIAAVVSA) are cleaved as a signal peptide. Residues Asn70, Asn91, and Asn126 are each glycosylated (N-linked (GlcNAc...) asparagine).

This sequence belongs to the plant dirigent protein family. Homodimer.

Its subcellular location is the secreted. The protein resides in the extracellular space. It is found in the apoplast. Functionally, dirigent proteins impart stereoselectivity on the phenoxy radical-coupling reaction, yielding optically active lignans from two molecules of coniferyl alcohol in the biosynthesis of lignans, flavonolignans, and alkaloids and thus plays a central role in plant secondary metabolism. In Arabidopsis thaliana (Mouse-ear cress), this protein is Dirigent protein 7 (DIR7).